Consider the following 460-residue polypeptide: MIASPLFAISPIDGRYSSKVIKLRNIFSEYAFLKFRVTIELLWLKKISLLQEFKIVYNKDVLNCLDRIIDNFSKKDALEIKILEKKTNHDVKSIEYFLQKKIFKCLGNHDILGLVHFGCTSEDINNLAYALMLKVSRRDIILPLWNKIIFEIKKIALLHHNVPMLSRTHGQPATPSTIGKELINFAYRLERQLKQFKNIEILGKINGSTGNYNALHFSHSSVDWHKISQEFVTSLGLFWNPYTTQIEPHDFISEFFSCLARVNTILINFNRDIWGYISLQYFNQTPKLDEIGSSVMPHKINPIDFENSEGNLGLSNAIISHLIEKLPISRWQRDLSDSTVLRNVGTVIAYSIIAYDSIILGLKKLKVNTSRLLQDLNHHWEILAEPIQTVMRKYGINDTYNELKNITRGKRVTSDIILKYVNSLKIPRNEKEKLLQLTPENYLGLSSKLVKIFNNSSELK.

N(6)-(1,2-dicarboxyethyl)-AMP is bound by residues 15–16 (RY), 88–90 (NHD), and 120–121 (TS). Catalysis depends on histidine 169, which acts as the Proton donor/acceptor. Glutamine 245 contacts N(6)-(1,2-dicarboxyethyl)-AMP. Serine 293 acts as the Proton donor/acceptor in catalysis. N(6)-(1,2-dicarboxyethyl)-AMP is bound by residues serine 294, 299–301 (KIN), asparagine 307, arginine 333, and 338–342 (STVLR).

It belongs to the lyase 1 family. Adenylosuccinate lyase subfamily. As to quaternary structure, homotetramer. Residues from neighboring subunits contribute catalytic and substrate-binding residues to each active site.

It carries out the reaction N(6)-(1,2-dicarboxyethyl)-AMP = fumarate + AMP. It catalyses the reaction (2S)-2-[5-amino-1-(5-phospho-beta-D-ribosyl)imidazole-4-carboxamido]succinate = 5-amino-1-(5-phospho-beta-D-ribosyl)imidazole-4-carboxamide + fumarate. The protein operates within purine metabolism; AMP biosynthesis via de novo pathway; AMP from IMP: step 2/2. Its pathway is purine metabolism; IMP biosynthesis via de novo pathway; 5-amino-1-(5-phospho-D-ribosyl)imidazole-4-carboxamide from 5-amino-1-(5-phospho-D-ribosyl)imidazole-4-carboxylate: step 2/2. In terms of biological role, catalyzes two reactions in de novo purine nucleotide biosynthesis. Catalyzes the breakdown of 5-aminoimidazole- (N-succinylocarboxamide) ribotide (SAICAR or 2-[5-amino-1-(5-phospho-beta-D-ribosyl)imidazole-4-carboxamido]succinate) to 5-aminoimidazole-4-carboxamide ribotide (AICAR or 5-amino-1-(5-phospho-beta-D-ribosyl)imidazole-4-carboxamide) and fumarate, and of adenylosuccinate (ADS or N(6)-(1,2-dicarboxyethyl)-AMP) to adenosine monophosphate (AMP) and fumarate. The protein is Adenylosuccinate lyase (purB) of Buchnera aphidicola subsp. Baizongia pistaciae (strain Bp).